The chain runs to 743 residues: Catalase-peroxidase (743 aa).

A compositionally biased stretch (polar residues) spans 1–15; that stretch reads MSSDSRPPQPDTSTQ. Residues 1-40 are disordered; the sequence is MSSDSRPPQPDTSTQSNSESESPAISSPTPQDHAPMTNRD. The segment covering 16 to 28 has biased composition (low complexity); sequence SNSESESPAISSP. The segment at residues 110–233 is a cross-link (tryptophyl-tyrosyl-methioninium (Trp-Tyr) (with M-259)); the sequence is WHAAGTYRIQ…YGATTMGLIY (124 aa). Histidine 111 acts as the Proton acceptor in catalysis. Residues 233-259 constitute a cross-link (tryptophyl-tyrosyl-methioninium (Tyr-Met) (with W-110)); it reads YVNPEGPEGKPDPVAAAHDIRETFARM. Histidine 274 is a heme b binding site. The interval 490–511 is disordered; it reads DKRGGANGGRLRLEPQKSWESN.

It belongs to the peroxidase family. Peroxidase/catalase subfamily. Homodimer or homotetramer. It depends on heme b as a cofactor. Post-translationally, formation of the three residue Trp-Tyr-Met cross-link is important for the catalase, but not the peroxidase activity of the enzyme.

The catalysed reaction is H2O2 + AH2 = A + 2 H2O. The enzyme catalyses 2 H2O2 = O2 + 2 H2O. In terms of biological role, bifunctional enzyme with both catalase and broad-spectrum peroxidase activity. This chain is Catalase-peroxidase, found in Mycobacterium ulcerans (strain Agy99).